The primary structure comprises 166 residues: Ribonuclease H (166 aa).

The RNase H type-1 domain maps to 5–147 (PRKRVALFTD…VDREARRQAQ (143 aa)). The Mg(2+) site is built by Asp14, Glu52, Asp74, and Asp139. Positions 128-166 (GHTGHPENERVDREARRQAQSQAKTPCPPRAPTLFHEEA) are disordered. Over residues 131–144 (GHPENERVDREARR) the composition is skewed to basic and acidic residues.

Belongs to the RNase H family. In terms of assembly, monomer. Requires Mg(2+) as cofactor.

The enzyme catalyses Endonucleolytic cleavage to 5'-phosphomonoester.. Its function is as follows. Endonuclease that specifically degrades the RNA of RNA-DNA hybrids. The sequence is that of Ribonuclease H (rnhA) from Thermus thermophilus (strain ATCC 27634 / DSM 579 / HB8).